Reading from the N-terminus, the 256-residue chain is Pimeloyl-[acyl-carrier protein] methyl ester esterase (256 aa).

Positions 15–242 constitute an AB hydrolase-1 domain; it reads HLVLLHGWGL…AAHAPFISHP (228 aa). Substrate is bound by residues W22, 82 to 83, and 143 to 147; these read SL and FLALQ. The Nucleophile role is filled by S82. Active-site residues include D207 and H235. A substrate-binding site is contributed by H235.

Belongs to the AB hydrolase superfamily. Carboxylesterase BioH family. As to quaternary structure, monomer.

Its subcellular location is the cytoplasm. The enzyme catalyses 6-carboxyhexanoyl-[ACP] methyl ester + H2O = 6-carboxyhexanoyl-[ACP] + methanol + H(+). It participates in cofactor biosynthesis; biotin biosynthesis. The physiological role of BioH is to remove the methyl group introduced by BioC when the pimeloyl moiety is complete. It allows to synthesize pimeloyl-ACP via the fatty acid synthetic pathway through the hydrolysis of the ester bonds of pimeloyl-ACP esters. The polypeptide is Pimeloyl-[acyl-carrier protein] methyl ester esterase (Salmonella choleraesuis (strain SC-B67)).